We begin with the raw amino-acid sequence, 1073 residues long: PX domain-containing protein LEC1 (1073 aa).

Basic and acidic residues predominate over residues 218–228 (CTESVDNDKSS). The disordered stretch occupies residues 218-240 (CTESVDNDKSSKSTPTSSPKSHA). Residues 229 to 238 (KSTPTSSPKS) are compositionally biased toward low complexity. A PX domain is found at 273–506 (LFSKLSLGVP…RFFLSGPNLD (234 aa)). Phosphoserine is present on residues S310 and S451. A disordered region spans residues 431 to 456 (IKEEDNIDEDEYEEEGEGEESDFDEY). The span at 432 to 453 (KEEDNIDEDEYEEEGEGEESDF) shows a compositional bias: acidic residues.

It is found in the endoplasmic reticulum membrane. The protein localises to the lipid droplet. Phosphoinositide-binding protein that plays a role in regulation of ergosterol distribution in the cell. Facilitates ergosterol transport between plasma membrane and lipid droplets. In Saccharomyces cerevisiae (strain ATCC 204508 / S288c) (Baker's yeast), this protein is PX domain-containing protein LEC1.